A 406-amino-acid chain; its full sequence is Cysteine desulfurase (406 aa).

K226 bears the N6-(pyridoxal phosphate)lysine mark. C364 acts as the Cysteine persulfide intermediate in catalysis.

It belongs to the class-V pyridoxal-phosphate-dependent aminotransferase family. Csd subfamily. Homodimer. Interacts with SufE and the SufBCD complex composed of SufB, SufC and SufD. The interaction with SufE is required to mediate the direct transfer of the sulfur atom from the S-sulfanylcysteine. Requires pyridoxal 5'-phosphate as cofactor.

It localises to the cytoplasm. The catalysed reaction is (sulfur carrier)-H + L-cysteine = (sulfur carrier)-SH + L-alanine. It catalyses the reaction L-selenocysteine + AH2 = hydrogenselenide + L-alanine + A + H(+). It functions in the pathway cofactor biosynthesis; iron-sulfur cluster biosynthesis. Functionally, cysteine desulfurases mobilize the sulfur from L-cysteine to yield L-alanine, an essential step in sulfur metabolism for biosynthesis of a variety of sulfur-containing biomolecules. Component of the suf operon, which is activated and required under specific conditions such as oxidative stress and iron limitation. Acts as a potent selenocysteine lyase in vitro, that mobilizes selenium from L-selenocysteine. Selenocysteine lyase activity is however unsure in vivo. This chain is Cysteine desulfurase, found in Escherichia coli O139:H28 (strain E24377A / ETEC).